Here is a 248-residue protein sequence, read N- to C-terminus: Granzyme E (248 aa).

Positions 1-18 (MPPVLILLTLLLPLGAGA) are cleaved as a signal peptide. The propeptide occupies 19–20 (EE). Residues 21–246 (IIGGHVVKPH…FLPWISRNMK (226 aa)) form the Peptidase S1 domain. An intrachain disulfide couples Cys-50 to Cys-66. The Charge relay system role is filled by His-65. Asn-68 and Asn-102 each carry an N-linked (GlcNAc...) asparagine glycan. Asp-109 functions as the Charge relay system in the catalytic mechanism. Intrachain disulfides connect Cys-143–Cys-210 and Cys-175–Cys-189. Residue Asn-154 is glycosylated (N-linked (GlcNAc...) asparagine). Residue Ser-204 is the Charge relay system of the active site. A glycan (N-linked (GlcNAc...) asparagine) is linked at Asn-223.

The protein belongs to the peptidase S1 family. Granzyme subfamily.

It localises to the cytolytic granule. In terms of biological role, this enzyme is probably necessary for target cell lysis in cell-mediated immune responses. The protein is Granzyme E (Gzme) of Mus musculus (Mouse).